The chain runs to 446 residues: tRNA modification GTPase MnmE (446 aa).

3 residues coordinate (6S)-5-formyl-5,6,7,8-tetrahydrofolate: R28, E85, and K124. Residues 220 to 372 (GLTVVLVGQP…LRAKLLQAAG (153 aa)) form the TrmE-type G domain. A K(+)-binding site is contributed by N230. GTP is bound by residues 230 to 235 (NVGKSS), 249 to 255 (TEIAGTT), and 274 to 277 (DTAG). A Mg(2+)-binding site is contributed by S234. The K(+) site is built by T249, I251, and T254. Residue T255 coordinates Mg(2+). K446 contacts (6S)-5-formyl-5,6,7,8-tetrahydrofolate.

Belongs to the TRAFAC class TrmE-Era-EngA-EngB-Septin-like GTPase superfamily. TrmE GTPase family. Homodimer. Heterotetramer of two MnmE and two MnmG subunits. K(+) is required as a cofactor.

Its subcellular location is the cytoplasm. Its function is as follows. Exhibits a very high intrinsic GTPase hydrolysis rate. Involved in the addition of a carboxymethylaminomethyl (cmnm) group at the wobble position (U34) of certain tRNAs, forming tRNA-cmnm(5)s(2)U34. This chain is tRNA modification GTPase MnmE, found in Thiobacillus denitrificans (strain ATCC 25259 / T1).